A 117-amino-acid chain; its full sequence is Large ribosomal subunit protein uL18 (117 aa).

This sequence belongs to the universal ribosomal protein uL18 family. As to quaternary structure, part of the 50S ribosomal subunit; part of the 5S rRNA/L5/L18/L25 subcomplex. Contacts the 5S and 23S rRNAs.

This is one of the proteins that bind and probably mediate the attachment of the 5S RNA into the large ribosomal subunit, where it forms part of the central protuberance. The polypeptide is Large ribosomal subunit protein uL18 (Phytoplasma mali (strain AT)).